The chain runs to 1317 residues: DNA-directed RNA polymerase subunit beta' (1317 aa).

Residues C60, C62, C75, and C78 each contribute to the Zn(2+) site. Residues D535, D537, and D539 each coordinate Mg(2+). Zn(2+)-binding residues include C890, C967, C974, and C977.

Belongs to the RNA polymerase beta' chain family. The RNAP catalytic core consists of 2 alpha, 1 beta, 1 beta' and 1 omega subunit. When a sigma factor is associated with the core the holoenzyme is formed, which can initiate transcription. It depends on Mg(2+) as a cofactor. Requires Zn(2+) as cofactor.

The catalysed reaction is RNA(n) + a ribonucleoside 5'-triphosphate = RNA(n+1) + diphosphate. Functionally, DNA-dependent RNA polymerase catalyzes the transcription of DNA into RNA using the four ribonucleoside triphosphates as substrates. In Mycolicibacterium smegmatis (strain ATCC 700084 / mc(2)155) (Mycobacterium smegmatis), this protein is DNA-directed RNA polymerase subunit beta'.